The sequence spans 382 residues: Protein phosphatase 1A (382 aa).

Residue Gly-2 is the site of N-myristoyl glycine attachment. A PPM-type phosphatase domain is found at 23–291; that stretch reads RYGLSSMQGW…DNMSVILICF (269 aa). Positions 60, 61, 239, and 282 each coordinate Mn(2+). 2 positions are modified to phosphoserine: Ser-375 and Ser-377.

The protein belongs to the PP2C family. As to quaternary structure, monomer. Interacts with SMAD2; the interaction dephosphorylates SMAD2 in its C-terminal SXS motif resulting in disruption of the SMAD2/SMAD4 complex, SMAD2 nuclear export and termination of the TGF-beta-mediated signaling. Interacts with SMAD2; the interaction dephosphorylates SMAD2 in its C-terminal SXS motif resulting in disruption of the SMAD2/SMAD4 complex, SMAD2 nuclear export and termination of the TGF-beta-mediated signaling. Interacts with the phosphorylated form of IKBKB/IKKB. The cofactor is Mg(2+). Mn(2+) is required as a cofactor. Post-translationally, N-myristoylation is essential for the recognition of its substrates for dephosphorylation.

The protein resides in the nucleus. It localises to the cytoplasm. The protein localises to the cytosol. Its subcellular location is the membrane. The catalysed reaction is O-phospho-L-seryl-[protein] + H2O = L-seryl-[protein] + phosphate. It catalyses the reaction O-phospho-L-threonyl-[protein] + H2O = L-threonyl-[protein] + phosphate. In terms of biological role, enzyme with a broad specificity. Negatively regulates TGF-beta signaling through dephosphorylating SMAD2 and SMAD3, resulting in their dissociation from SMAD4, nuclear export of the SMADs and termination of the TGF-beta-mediated signaling. Dephosphorylates PRKAA1 and PRKAA2. Plays an important role in the termination of TNF-alpha-mediated NF-kappa-B activation through dephosphorylating and inactivating IKBKB/IKKB. The chain is Protein phosphatase 1A (PPM1A) from Oryctolagus cuniculus (Rabbit).